We begin with the raw amino-acid sequence, 371 residues long: Envelope glycoprotein M (371 aa).

Residues 1–13 (MAPSHVDKVNTRT) are Intravirion-facing. Residues 14-34 (WSASIVFMVLTFVNVSVHLVL) traverse the membrane as a helical segment. Residues 35–79 (SNFPHLGYPCVYYHVVDFERLNMSAYNVMHLHTPMLFLDSVQLVC) are Virion surface-facing. A helical transmembrane segment spans residues 80 to 100 (YAVFMQLVFLAVTIYYLVCWI). Over 101-126 (KISMRKDKGMSLNQSTRDISYMGDSL) the chain is Intravirion. The chain crosses the membrane as a helical span at residues 127 to 147 (TAFLFILSMDTFQLFTLTMSF). Over 148–151 (RLPS) the chain is Virion surface. The helical transmembrane segment at 152–172 (MIAFMAAVHFFCLTIFNVSMV) threads the bilayer. Residues 173–200 (TQYRSYKRSLFFFSRLHPKLKGTVQFRT) lie on the Intravirion side of the membrane. The helical transmembrane segment at 201-221 (LIVNLVEVALGFNTTVVAMAL) threads the bilayer. Residues 222 to 239 (CYGFGNNFFVRTGHMVLA) lie on the Virion surface side of the membrane. Residues 240–260 (VFVVYAIISIIYFLLIEAVFF) traverse the membrane as a helical segment. Residues 261 to 264 (QYVK) are Intravirion-facing. The chain crosses the membrane as a helical span at residues 265–285 (VQFGYHLGAFFGLCGLIYPIV). Over 286–298 (QYDTFLSNEYRTG) the chain is Virion surface. A helical membrane pass occupies residues 299–319 (ISWSFGMLFFIWAMFTTCRAV). The Intravirion portion of the chain corresponds to 320-371 (RYFRGRGSGSVKYQALATASGEEVAALSHHDSLESRRLREEEDDDDEDFEDA). Residues 346-371 (LSHHDSLESRRLREEEDDDDEDFEDA) form a disordered region. Residues 347-359 (SHHDSLESRRLRE) are compositionally biased toward basic and acidic residues. Positions 360–371 (EEDDDDEDFEDA) are enriched in acidic residues.

Belongs to the herpesviridae glycoprotein M family. In terms of assembly, interacts (via N-terminus) with gN (via N-terminus). The gM-gN heterodimer forms the gCII complex.

It is found in the virion membrane. Its subcellular location is the host Golgi apparatus. The protein resides in the host trans-Golgi network. It localises to the host endosome membrane. The protein localises to the host nucleus inner membrane. Envelope glycoprotein important for virion assembly and egress. Plays a role in the correct incorporation of gH-gL into virion membrane. Directs the glycoprotein N (gN) to the host trans-Golgi network. The protein is Envelope glycoprotein M of Homo sapiens (Human).